Reading from the N-terminus, the 165-residue chain is RxLR effector protein PITG_09218 (165 aa).

The signal sequence occupies residues 1–24 (MRFSAFLTLLLVAFVASCSTFASA). The short motif at 31–57 (RRLRADAAPVPVNKDNVAKLAGGFLEK) is the RxLR-dEER element. A helical membrane pass occupies residues 129–149 (VTLGATVAGFAIYGAYKALFD).

This sequence belongs to the RxLR effector family.

The protein resides in the secreted. It is found in the host mitochondrion membrane. Its subcellular location is the host endoplasmic reticulum membrane. Its function is as follows. Effector that enhances P.infestans colonization of Nicotiana benthamiana leaves. The chain is RxLR effector protein PITG_09218 from Phytophthora infestans (strain T30-4) (Potato late blight agent).